Reading from the N-terminus, the 113-residue chain is UPF0482 protein YnfB (113 aa).

Residues 1 to 28 (MKITLSKRIDLLAFLLPCALALSTTVHA) form the signal peptide.

It belongs to the UPF0482 family.

The polypeptide is UPF0482 protein YnfB (Escherichia coli O157:H7).